Consider the following 152-residue polypeptide: Protein NrdI (152 aa).

The protein belongs to the NrdI family.

Its function is as follows. Probably involved in ribonucleotide reductase function. The polypeptide is Protein NrdI (Mycobacterium sp. (strain JLS)).